Here is a 522-residue protein sequence, read N- to C-terminus: Zinc finger protein 892 (522 aa).

Disordered stretches follow at residues 1-22 (MEPE…GNPK) and 96-124 (AASQ…ESAP). The segment covering 100–116 (KHWETIPESKELTPEKD) has biased composition (basic and acidic residues). C2H2-type zinc fingers lie at residues 221-243 (WKCN…QRIH), 249-271 (YECN…QRIH), 277-299 (YECH…HIIH), 305-327 (YECN…QRIH), 333-355 (YECN…QVIH), 361-383 (YKCN…QRTH), 389-411 (YECN…QRTH), 417-439 (YKCN…QRTH), 445-467 (YKCK…QKTH), and 473-495 (YKCK…QKTH).

It belongs to the krueppel C2H2-type zinc-finger protein family.

The protein resides in the nucleus. Functionally, may be involved in transcriptional regulation. This Homo sapiens (Human) protein is Zinc finger protein 892.